The chain runs to 498 residues: Aspartyl/glutamyl-tRNA(Asn/Gln) amidotransferase subunit B (498 aa).

The protein belongs to the GatB/GatE family. GatB subfamily. Heterotrimer of A, B and C subunits.

It catalyses the reaction L-glutamyl-tRNA(Gln) + L-glutamine + ATP + H2O = L-glutaminyl-tRNA(Gln) + L-glutamate + ADP + phosphate + H(+). The catalysed reaction is L-aspartyl-tRNA(Asn) + L-glutamine + ATP + H2O = L-asparaginyl-tRNA(Asn) + L-glutamate + ADP + phosphate + 2 H(+). Functionally, allows the formation of correctly charged Asn-tRNA(Asn) or Gln-tRNA(Gln) through the transamidation of misacylated Asp-tRNA(Asn) or Glu-tRNA(Gln) in organisms which lack either or both of asparaginyl-tRNA or glutaminyl-tRNA synthetases. The reaction takes place in the presence of glutamine and ATP through an activated phospho-Asp-tRNA(Asn) or phospho-Glu-tRNA(Gln). This chain is Aspartyl/glutamyl-tRNA(Asn/Gln) amidotransferase subunit B, found in Caulobacter vibrioides (strain ATCC 19089 / CIP 103742 / CB 15) (Caulobacter crescentus).